We begin with the raw amino-acid sequence, 417 residues long: Dihydroorotase (417 aa).

His60 and His62 together coordinate Zn(2+). Substrate-binding positions include His62–Arg64 and Asn94. Residues Lys138, His167, His207, and Asp275 each coordinate Zn(2+). Position 138 is an N6-carboxylysine (Lys138). The active site involves Asp275. Residues His279 and Ala289–Gly290 contribute to the substrate site.

The protein belongs to the metallo-dependent hydrolases superfamily. DHOase family. Class I DHOase subfamily. Zn(2+) serves as cofactor.

It carries out the reaction (S)-dihydroorotate + H2O = N-carbamoyl-L-aspartate + H(+). The protein operates within pyrimidine metabolism; UMP biosynthesis via de novo pathway; (S)-dihydroorotate from bicarbonate: step 3/3. In terms of biological role, catalyzes the reversible cyclization of carbamoyl aspartate to dihydroorotate. The chain is Dihydroorotase from Pyrococcus horikoshii (strain ATCC 700860 / DSM 12428 / JCM 9974 / NBRC 100139 / OT-3).